We begin with the raw amino-acid sequence, 161 residues long: Cyclic pyranopterin monophosphate synthase (161 aa).

Residues 75–77 (LCH) and 113–114 (ME) contribute to the substrate site. The active site involves D128.

The protein belongs to the MoaC family. As to quaternary structure, homohexamer; trimer of dimers.

The enzyme catalyses (8S)-3',8-cyclo-7,8-dihydroguanosine 5'-triphosphate = cyclic pyranopterin phosphate + diphosphate. It functions in the pathway cofactor biosynthesis; molybdopterin biosynthesis. In terms of biological role, catalyzes the conversion of (8S)-3',8-cyclo-7,8-dihydroguanosine 5'-triphosphate to cyclic pyranopterin monophosphate (cPMP). The polypeptide is Cyclic pyranopterin monophosphate synthase (Thioalkalivibrio sulfidiphilus (strain HL-EbGR7)).